Here is a 517-residue protein sequence, read N- to C-terminus: Nicotine N-demethylase CYP82E4 (517 aa).

The helical transmembrane segment at 2–22 threads the bilayer; the sequence is VFPIEAIVGLVTFTFLFFFLW. A Glycyl lysine isopeptide (Lys-Gly) (interchain with G-Cter in ubiquitin) cross-link involves residue Lys254. Heme is bound at residue Cys457.

It belongs to the cytochrome P450 family. CYP82E2 subfamily. Heme serves as cofactor. In terms of tissue distribution, expressed at low levels in green leaves.

It is found in the membrane. The enzyme catalyses (S)-nicotine + reduced [NADPH--hemoprotein reductase] + O2 = (S)-nornicotine + formaldehyde + oxidized [NADPH--hemoprotein reductase] + H2O + H(+). It participates in alkaloid biosynthesis; nicotine biosynthesis. Its function is as follows. Involved in the biosynthesis of pyridine alkaloid natural products, leading mainly to the production of anabasine, anatabine, nicotine and nornicotine, effective deterrents against herbivores with antiparasitic and pesticide properties (neurotoxins); nornicotine serves as the precursor in the synthesis of the carcinogen compound N'-nitrosonornicotine (NNN). Catalyzes the demethylation of nicotine to form nornicotine. The sequence is that of Nicotine N-demethylase CYP82E4 from Nicotiana tabacum (Common tobacco).